Consider the following 240-residue polypeptide: Ubiquinone biosynthesis O-methyltransferase (240 aa).

Residues Arg-44, Gly-64, Asp-85, and Met-129 each contribute to the S-adenosyl-L-methionine site.

It belongs to the methyltransferase superfamily. UbiG/COQ3 family.

The enzyme catalyses a 3-demethylubiquinol + S-adenosyl-L-methionine = a ubiquinol + S-adenosyl-L-homocysteine + H(+). It catalyses the reaction a 3-(all-trans-polyprenyl)benzene-1,2-diol + S-adenosyl-L-methionine = a 2-methoxy-6-(all-trans-polyprenyl)phenol + S-adenosyl-L-homocysteine + H(+). It functions in the pathway cofactor biosynthesis; ubiquinone biosynthesis. Its function is as follows. O-methyltransferase that catalyzes the 2 O-methylation steps in the ubiquinone biosynthetic pathway. The protein is Ubiquinone biosynthesis O-methyltransferase of Escherichia coli (strain K12 / MC4100 / BW2952).